Consider the following 490-residue polypeptide: Betaine aldehyde dehydrogenase (490 aa).

Residues S26, I27, and D93 each coordinate K(+). NAD(+) is bound at residue 150–152 (GAW). Catalysis depends on K162, which acts as the Charge relay system. NAD(+) contacts are provided by residues 176–179 (KPSE) and 230–233 (GVET). L246 contacts K(+). Residue E252 is the Proton acceptor of the active site. NAD(+) is bound by residues G254, C286, and E387. C286 (nucleophile) is an active-site residue. At C286 the chain carries Cysteine sulfenic acid (-SOH). K(+)-binding residues include K457 and G460. E464 (charge relay system) is an active-site residue.

The protein belongs to the aldehyde dehydrogenase family. Dimer of dimers. Requires K(+) as cofactor.

It carries out the reaction betaine aldehyde + NAD(+) + H2O = glycine betaine + NADH + 2 H(+). It participates in amine and polyamine biosynthesis; betaine biosynthesis via choline pathway; betaine from betaine aldehyde: step 1/1. Its function is as follows. Involved in the biosynthesis of the osmoprotectant glycine betaine. Catalyzes the irreversible oxidation of betaine aldehyde to the corresponding acid. This chain is Betaine aldehyde dehydrogenase, found in Acinetobacter baumannii (strain ACICU).